The primary structure comprises 84 residues: Cytochrome b559 subunit alpha (84 aa).

A helical transmembrane segment spans residues 22-36 (VIHSITIPALFVAGW). H24 is a heme binding site.

This sequence belongs to the PsbE/PsbF family. As to quaternary structure, heterodimer of an alpha subunit and a beta subunit. PSII is composed of 1 copy each of membrane proteins PsbA, PsbB, PsbC, PsbD, PsbE, PsbF, PsbH, PsbI, PsbJ, PsbK, PsbL, PsbM, PsbT, PsbX, PsbY, PsbZ, Psb30/Ycf12, at least 3 peripheral proteins of the oxygen-evolving complex and a large number of cofactors. It forms dimeric complexes. Heme b serves as cofactor.

It localises to the plastid. The protein localises to the chloroplast thylakoid membrane. This b-type cytochrome is tightly associated with the reaction center of photosystem II (PSII). PSII is a light-driven water:plastoquinone oxidoreductase that uses light energy to abstract electrons from H(2)O, generating O(2) and a proton gradient subsequently used for ATP formation. It consists of a core antenna complex that captures photons, and an electron transfer chain that converts photonic excitation into a charge separation. In Porphyra purpurea (Red seaweed), this protein is Cytochrome b559 subunit alpha.